A 121-amino-acid chain; its full sequence is UPF0344 protein BCG9842_B4136 (121 aa).

4 helical membrane passes run 6–26 (ITAWALGLILFFVAYSLYSAG), 38–58 (LMYIIIIVTGFMLYMSIVKTA), 65–85 (WYGLKMLTGILVIGGMEMVLV), and 92–112 (PTGAVWGLFIVALVAVFYLGL).

This sequence belongs to the UPF0344 family.

The protein localises to the cell membrane. The polypeptide is UPF0344 protein BCG9842_B4136 (Bacillus cereus (strain G9842)).